We begin with the raw amino-acid sequence, 1035 residues long: Glycine dehydrogenase (decarboxylating), mitochondrial (1035 aa).

Residues methionine 1–serine 64 constitute a mitochondrion transit peptide. At lysine 771 the chain carries N6-(pyridoxal phosphate)lysine.

It belongs to the GcvP family. In terms of assembly, homodimer. The glycine cleavage system is composed of four proteins: P, T, L and H. Pyridoxal 5'-phosphate is required as a cofactor.

The protein resides in the mitochondrion. The catalysed reaction is N(6)-[(R)-lipoyl]-L-lysyl-[glycine-cleavage complex H protein] + glycine + H(+) = N(6)-[(R)-S(8)-aminomethyldihydrolipoyl]-L-lysyl-[glycine-cleavage complex H protein] + CO2. In terms of biological role, the glycine cleavage system catalyzes the degradation of glycine. The P protein binds the alpha-amino group of glycine through its pyridoxal phosphate cofactor; CO(2) is released and the remaining methylamine moiety is then transferred to the lipoamide cofactor of the H protein. This chain is Glycine dehydrogenase (decarboxylating), mitochondrial (GDCSP), found in Solanum tuberosum (Potato).